A 712-amino-acid chain; its full sequence is Protein SDA1 homolog (712 aa).

T234 is subject to Phosphothreonine. S236 bears the Phosphoserine mark. Disordered regions lie at residues T488–I573 and V662–K712. Composition is skewed to acidic residues over residues I491–D501 and G516–E559. Positions E560–R572 are enriched in basic and acidic residues. Basic residues-rich tracts occupy residues R671–K692 and A700–K712.

The protein belongs to the SDA1 family.

The protein localises to the nucleus. It is found in the nucleolus. Its function is as follows. Required for 60S pre-ribosomal subunits export to the cytoplasm. The polypeptide is Protein SDA1 homolog (Mys45A) (Drosophila melanogaster (Fruit fly)).